The chain runs to 480 residues: 3-isopropylmalate dehydratase large subunit (480 aa).

Residues Cys-360, Cys-418, and Cys-421 each contribute to the [4Fe-4S] cluster site.

It belongs to the aconitase/IPM isomerase family. LeuC type 1 subfamily. As to quaternary structure, heterodimer of LeuC and LeuD. The cofactor is [4Fe-4S] cluster.

It carries out the reaction (2R,3S)-3-isopropylmalate = (2S)-2-isopropylmalate. The protein operates within amino-acid biosynthesis; L-leucine biosynthesis; L-leucine from 3-methyl-2-oxobutanoate: step 2/4. Functionally, catalyzes the isomerization between 2-isopropylmalate and 3-isopropylmalate, via the formation of 2-isopropylmaleate. The polypeptide is 3-isopropylmalate dehydratase large subunit (Anaeromyxobacter dehalogenans (strain 2CP-1 / ATCC BAA-258)).